The following is a 431-amino-acid chain: Tyrosine--tRNA ligase (431 aa).

Y33 provides a ligand contact to L-tyrosine. The 'HIGH' region motif lies at 38–47 (PTADSLHIGS). The L-tyrosine site is built by Y172 and Q176. The short motif at 234–238 (KFGKS) is the 'KMSKS' region element. Position 237 (K237) interacts with ATP. The region spanning 364–431 (INIVEVLNEK…KKNYFVLNVK (68 aa)) is the S4 RNA-binding domain.

This sequence belongs to the class-I aminoacyl-tRNA synthetase family. TyrS type 1 subfamily. As to quaternary structure, homodimer.

It localises to the cytoplasm. It catalyses the reaction tRNA(Tyr) + L-tyrosine + ATP = L-tyrosyl-tRNA(Tyr) + AMP + diphosphate + H(+). Catalyzes the attachment of tyrosine to tRNA(Tyr) in a two-step reaction: tyrosine is first activated by ATP to form Tyr-AMP and then transferred to the acceptor end of tRNA(Tyr). This is Tyrosine--tRNA ligase from Flavobacterium psychrophilum (strain ATCC 49511 / DSM 21280 / CIP 103535 / JIP02/86).